Reading from the N-terminus, the 578-residue chain is Galectin-3-binding protein (578 aa).

A signal peptide spans 1 to 18; sequence MAFLWLFSLWLLVPGTQG. The SRCR domain occupies 24–124; it reads MRLVNGASAN…HEKDAGVVCS (101 aa). 3 disulfides stabilise this stretch: Cys49-Cys113, Cys62-Cys123, and Cys93-Cys103. N-linked (GlcNAc...) asparagine glycosylation is found at Asn69 and Asn102. A BTB domain is found at 153-221; sequence CDLFIQVTGQ…FYSRRIEVTM (69 aa). The region spanning 260 to 360 is the BACK domain; the sequence is PLELYAYAQA…VLPQELFELQ (101 aa). N-linked (GlcNAc...) asparagine glycans are attached at residues Asn362 and Asn398.

As to quaternary structure, homodimers and homomultimers. The multimers form ring-like structures with a diameter of 30-40 nm. Binds LGALS1 and LGALS3. Binds ITGB1, COL4A1, COL5A1, COL6A1, FN1 and NID. The unglycosylated form interacts with PDE4DIP; this interaction, which is PDE4DIP isoform-specific, may connect a pericentrosomal complex to the gamma-tubulin ring complex (gamma-TuRC) to promote microtubule assembly and acetylation.

It localises to the secreted. It is found in the extracellular space. The protein localises to the extracellular matrix. Promotes integrin-mediated cell adhesion. May stimulate host defense against viruses and tumor cells. In Mesocricetus auratus (Golden hamster), this protein is Galectin-3-binding protein (LGALS3BP).